Reading from the N-terminus, the 549-residue chain is Mitogen-activated protein kinase 15 (549 aa).

Positions 1 to 20 are ubiquitin-conjugating; it reads MCAAEVDRHVAQRYLIKRRL. In terms of domain architecture, Protein kinase spans 14 to 305; sequence YLIKRRLGKG…AEQALQHPYV (292 aa). Residues 20–28 and Lys-43 each bind ATP; that span reads LGKGAYGIV. Asp-138 functions as the Proton acceptor in the catalytic mechanism. Residue Thr-176 is modified to Phosphothreonine. A TXY motif is present at residues 176–178; the sequence is TEY. Residue Tyr-178 is modified to Phosphotyrosine. The necessary to interact with ESRRA, to regulate its subcellular localization and to inhibit its transcriptional activity stretch occupies residues 266–286; sequence LDALLPPDTPPEALDLLKRLL. The interval 301–382 is requires for interaction with GABARAP, MAP1LC3B AND GABARAPL1; the sequence is QHPYVQRFHC…ARTQSLKSGV (82 aa). The interval 370-507 is disordered; that stretch reads ASPARTQSLK…PEPRPGRRMF (138 aa). PXXXP motif repeat units follow at residues 380-384 and 387-391; these read SGVLP and PAETP. PXXXP motif; regulates binding with chromatin and interaction with PCNA repeat units follow at residues 395-399 and 403-407; these read RGPKP and PGHDP. Residues 403–416 show a composition bias toward basic and acidic residues; that stretch reads PGHDPEHVEVRRQS. Arg-451 carries the post-translational modification Omega-N-methylarginine. Positions 456 to 467 are enriched in polar residues; it reads SLTSQAEAQAAN. Low complexity predominate over residues 483–492; that stretch reads AVGARRVPSR. The span at 493–502 shows a compositional bias: basic and acidic residues; sequence LPREAPEPRP.

Belongs to the protein kinase superfamily. CMGC Ser/Thr protein kinase family. MAP kinase subfamily. In terms of assembly, interacts with TGFB1I1. Interacts with CSK/c-Src, ABL1 and RET. Interacts with GABARAP, MAP1LC3B and GABARAPL1; controls, in a kinase-dependent fashion, both basal and starvation-induced autophagy. Interacts with ESRRA; promotes re-localization of ESRRA to the cytoplasm through a XPO1-dependent mechanism then inhibits ESRRA transcriptional activity. Interacts with PCNA; the interaction is chromatin binding- and kinase activity-dependent and prevents MDM2-mediated PCNA destruction by inhibiting the association of PCNA with MDM2. Interacts with DVL2. Interacts with CLIC3; MAPK15 does not phosphorylates CLIC3. In terms of processing, autophosphorylated on Thr-176 and Tyr-178; activates the enzyme. Ubiquitinated. Ubiquitination may allow its tight kinase activity regulation and rapid turnover. May be ubiquitinated by a SCF E3 ligase. Expressed at all stages of oocyte meiotic maturation.

The protein localises to the cytoplasm. The protein resides in the cytoskeleton. It localises to the cilium basal body. Its subcellular location is the cell junction. It is found in the tight junction. The protein localises to the microtubule organizing center. The protein resides in the centrosome. It localises to the centriole. Its subcellular location is the cytoplasmic vesicle. It is found in the autophagosome. The protein localises to the golgi apparatus. The protein resides in the nucleus. It localises to the spindle. The enzyme catalyses L-seryl-[protein] + ATP = O-phospho-L-seryl-[protein] + ADP + H(+). The catalysed reaction is L-threonyl-[protein] + ATP = O-phospho-L-threonyl-[protein] + ADP + H(+). Activated by threonine and tyrosine phosphorylation. Inhibited by dual specificity phosphatases, such as DUSP1. Phosphorylation and activation in response to DNA damaging agents, serum stimulation. Constitutively activated when phosphorylated on Tyr-178. Activity depends on the relative rates of MAPK15 autophosphorylation and dephosphorylation by PTPN1. Its function is as follows. Atypical MAPK protein that regulates several process such as autophagy, ciliogenesis, protein trafficking/secretion and genome integrity, in a kinase activity-dependent manner. Controls both, basal and starvation-induced autophagy throught its interaction with GABARAP, MAP1LC3B and GABARAPL1 leading to autophagosome formation, SQSTM1 degradation and reduced MAP1LC3B inhibitory phosphorylation. Regulates primary cilium formation and the localization of ciliary proteins involved in cilium structure, transport, and signaling. Prevents the relocation of the sugar-adding enzymes from the Golgi to the endoplasmic reticulum, thereby restricting the production of sugar-coated proteins. Upon amino-acid starvation, mediates transitional endoplasmic reticulum site disassembly and inhibition of secretion. Binds to chromatin leading to MAPK15 activation and interaction with PCNA, that which protects genomic integrity by inhibiting MDM2-mediated degradation of PCNA. Regulates DA transporter (DAT) activity and protein expression via activation of RhoA. In response to H(2)O(2) treatment phosphorylates ELAVL1, thus preventing it from binding to the PDCD4 3'UTR and rendering the PDCD4 mRNA accessible to miR-21 and leading to its degradation and loss of protein expression. Also functions in a kinase activity-independent manner as a negative regulator of growth. Phosphorylates in vitro FOS and MBP. During oocyte maturation, plays a key role in the microtubule organization and meiotic cell cycle progression in oocytes, fertilized eggs, and early embryos. Interacts with ESRRA promoting its re-localization from the nucleus to the cytoplasm and then prevents its transcriptional activity. This chain is Mitogen-activated protein kinase 15, found in Mus musculus (Mouse).